Reading from the N-terminus, the 438-residue chain is UDP-N-acetylmuramoylalanine--D-glutamate ligase (438 aa).

An ATP-binding site is contributed by 112–118; that stretch reads GSNGKST.

Belongs to the MurCDEF family.

The protein localises to the cytoplasm. The catalysed reaction is UDP-N-acetyl-alpha-D-muramoyl-L-alanine + D-glutamate + ATP = UDP-N-acetyl-alpha-D-muramoyl-L-alanyl-D-glutamate + ADP + phosphate + H(+). It participates in cell wall biogenesis; peptidoglycan biosynthesis. Its function is as follows. Cell wall formation. Catalyzes the addition of glutamate to the nucleotide precursor UDP-N-acetylmuramoyl-L-alanine (UMA). The polypeptide is UDP-N-acetylmuramoylalanine--D-glutamate ligase (Shigella dysenteriae serotype 1 (strain Sd197)).